We begin with the raw amino-acid sequence, 441 residues long: Putative F-box/FBD/LRR-repeat protein At4g00315 (441 aa).

The F-box domain occupies 1–47 (MDKTSQLPDELLVKVLSFLPTKDAVRTSLLSMRWKSLWMWLPKLEYD). 8 LRR repeats span residues 57 to 82 (QGLA…SLKL), 87 to 115 (IGSI…SLKL), 137 to 164 (ILKL…FLGR), 165 to 190 (VTYS…VVER), 211 to 236 (LKMS…KVTD), 243 to 271 (SDNE…DFVL), 293 to 318 (LGVY…KICS), and 319 to 344 (CDSD…EAYV). One can recognise an FBD domain in the interval 358 to 410 (QWGNQLNCVPKCLLSSLETFKWSEMYGLLQNQMDVAKYILRNARCLKSATIFF).

The protein is Putative F-box/FBD/LRR-repeat protein At4g00315 of Arabidopsis thaliana (Mouse-ear cress).